Consider the following 210-residue polypeptide: Large ribosomal subunit protein uL3 (210 aa).

The disordered stretch occupies residues Phe-119–Pro-151.

Belongs to the universal ribosomal protein uL3 family. Part of the 50S ribosomal subunit. Forms a cluster with proteins L14 and L19.

Its function is as follows. One of the primary rRNA binding proteins, it binds directly near the 3'-end of the 23S rRNA, where it nucleates assembly of the 50S subunit. This chain is Large ribosomal subunit protein uL3, found in Bacillus cytotoxicus (strain DSM 22905 / CIP 110041 / 391-98 / NVH 391-98).